The chain runs to 430 residues: Maintenance of mitochondrial morphology protein 1 (430 aa).

The Lumenal segment spans residues 1–70 (MSQGLIETTT…NGNTWSFTQG (70 aa)). Residues 71–91 (LVIGQISVIFIIIVFVKFFVF) traverse the membrane as a helical segment. Over 92–430 (ADSSSHIPTK…TPGEFVNSNI (339 aa)) the chain is Cytoplasmic. One can recognise an SMP-LTD domain in the interval 159 to 387 (ASESLDWFNV…EPRFQVVRLP (229 aa)). The disordered stretch occupies residues 305-326 (GYSKENGSADSASDNDEDEDDG). Residues 317 to 326 (SDNDEDEDDG) show a composition bias toward acidic residues.

It belongs to the MMM1 family. Homodimer. Component of the ER-mitochondria encounter structure (ERMES) or MDM complex, composed of MMM1, MDM10, MDM12 and MDM34. An MMM1 homodimer associates with one molecule of MDM12 on each side in a pairwise head-to-tail manner, and the SMP-LTD domains of MMM1 and MDM12 generate a continuous hydrophobic tunnel for phospholipid trafficking.

The protein localises to the endoplasmic reticulum membrane. Component of the ERMES/MDM complex, which serves as a molecular tether to connect the endoplasmic reticulum (ER) and mitochondria. Components of this complex are involved in the control of mitochondrial shape and protein biogenesis, and function in nonvesicular lipid trafficking between the ER and mitochondria. The MDM12-MMM1 subcomplex functions in the major beta-barrel assembly pathway that is responsible for biogenesis of all outer membrane beta-barrel proteins, and acts in a late step after the SAM complex. The MDM10-MDM12-MMM1 subcomplex further acts in the TOM40-specific pathway after the action of the MDM12-MMM1 complex. Essential for establishing and maintaining the structure of mitochondria and maintenance of mtDNA nucleoids. In Candida dubliniensis (strain CD36 / ATCC MYA-646 / CBS 7987 / NCPF 3949 / NRRL Y-17841) (Yeast), this protein is Maintenance of mitochondrial morphology protein 1.